The sequence spans 630 residues: Plastin-1 (630 aa).

N-acetylmethionine is present on methionine 1. EF-hand domains lie at 11–46 (EELEELQEAFNKIDIDNSGYVSDYELQDLFKEASLP) and 51–86 (KVREIVEKILVVADNNKDGKISFEEFVSLMQELKSK). Residues aspartate 24, aspartate 26, serine 28, tyrosine 30, glutamate 35, aspartate 64, asparagine 66, aspartate 68, lysine 70, and glutamate 75 each coordinate Ca(2+). Actin-binding regions lie at residues 108-381 (TSSI…CLHK) and 382-626 (PDNN…GKGL). Calponin-homology (CH) domains lie at 122–238 (EEEK…KVGL), 266–377 (LSPE…NTYP), 396–505 (SKEE…RRYT), and 517–626 (KVTD…GKGL).

As to quaternary structure, monomer. Post-translationally, phosphorylated. In terms of tissue distribution, in the inner ear, it is expressed in the organ of Corti. Abundant in the utricle (at protein level).

The protein localises to the cytoplasm. It is found in the cell projection. It localises to the stereocilium. Functionally, actin-bundling protein. In the inner ear, it is required for stereocilia formation. Mediates liquid packing of actin filaments that is necessary for stereocilia to grow to their proper dimensions. This chain is Plastin-1 (Pls1), found in Mus musculus (Mouse).